The primary structure comprises 210 residues: Thymidylate kinase (210 aa).

10–17 (GPEGAGKS) is a binding site for ATP.

Belongs to the thymidylate kinase family.

The catalysed reaction is dTMP + ATP = dTDP + ADP. Its function is as follows. Phosphorylation of dTMP to form dTDP in both de novo and salvage pathways of dTTP synthesis. This Pseudomonas aeruginosa (strain LESB58) protein is Thymidylate kinase.